The chain runs to 523 residues: MVGQRVLLLVAFLLSGVLLSEAAKILTISTLGGSHYLLLDRVSQILQEHGHNVTMLHQSGKFLIPDIKEEEKSYQVIRWFSPEDHQKRIKKHFDSYIETALDGRKESEALVKLMEIFGTQCSYLLSRKDIMDSLKNENYDLVFVEAFDFCSFLIAEKLVKPFVAILPTTFGSLDFGLPSPLSYVPVFPSLLTDHMDFWGRVKNFLMFFSFSRSQWDMQSTFDNTIKEHFPEGSRPVLSHLLLKAELWFVNSDFAFDFARPLLPNTVYIGGLMEKPIKPVPQDLDNFIANFGDAGFVLVAFGSMLNTHQSQEVLKKMHNAFAHLPQGVIWTCQSSHWPRDVHLATNVKIVDWLPQSDLLAHPSIRLFVTHGGQNSVMEAIRHGVPMVGLPVNGDQHGNMVRVVAKNYGVSIRLNQVTADTLTLTMKQVIEDKRYKSAVVAASVILHSQPLSPAQRLVGWIDHILQTGGATHLKPYAFQQPWHEQYLIDVFVFLLGLTLGTMWLCGKLLGVVARWLRGARKVKKT.

The signal sequence occupies residues 1–22 (MVGQRVLLLVAFLLSGVLLSEA). Over 23–483 (AKILTISTLG…YAFQQPWHEQ (461 aa)) the chain is Extracellular. N-linked (GlcNAc...) asparagine glycosylation occurs at Asn52. The helical transmembrane segment at 484–504 (YLIDVFVFLLGLTLGTMWLCG) threads the bilayer. The Cytoplasmic portion of the chain corresponds to 505 to 523 (KLLGVVARWLRGARKVKKT).

This sequence belongs to the UDP-glycosyltransferase family.

It localises to the membrane. It catalyses the reaction glucuronate acceptor + UDP-alpha-D-glucuronate = acceptor beta-D-glucuronoside + UDP + H(+). UDP-glucuronosyltransferases catalyze phase II biotransformation reactions in which lipophilic substrates are conjugated with glucuronic acid to increase water solubility and enhance excretion. They are of major importance in the conjugation and subsequent elimination of potentially toxic xenobiotics and endogenous compounds. In Homo sapiens (Human), this protein is UDP-glucuronosyltransferase 3A1 (UGT3A1).